We begin with the raw amino-acid sequence, 145 residues long: D-aminoacyl-tRNA deacylase (145 aa).

Residues 137–138 (GP) carry the Gly-cisPro motif, important for rejection of L-amino acids motif.

It belongs to the DTD family. As to quaternary structure, homodimer.

The protein resides in the cytoplasm. The enzyme catalyses glycyl-tRNA(Ala) + H2O = tRNA(Ala) + glycine + H(+). It carries out the reaction a D-aminoacyl-tRNA + H2O = a tRNA + a D-alpha-amino acid + H(+). Its function is as follows. An aminoacyl-tRNA editing enzyme that deacylates mischarged D-aminoacyl-tRNAs. Also deacylates mischarged glycyl-tRNA(Ala), protecting cells against glycine mischarging by AlaRS. Acts via tRNA-based rather than protein-based catalysis; rejects L-amino acids rather than detecting D-amino acids in the active site. By recycling D-aminoacyl-tRNA to D-amino acids and free tRNA molecules, this enzyme counteracts the toxicity associated with the formation of D-aminoacyl-tRNA entities in vivo and helps enforce protein L-homochirality. This Pseudomonas fluorescens (strain Pf0-1) protein is D-aminoacyl-tRNA deacylase.